The primary structure comprises 372 residues: Alpha-parvin (372 aa).

Over residues 1–11 (MATSPQKSPSV) the composition is skewed to low complexity. Positions 1-44 (MATSPQKSPSVPKSPTPKSPPSRKKDDSFLGKLGGTLARRKKAK) are disordered. Residue Ala-2 is modified to N-acetylalanine. Residues Ser-8, Ser-14, and Ser-19 each carry the phosphoserine modification. The segment at 21–25 (PSRKK) is interaction with ARHGAP31. Phosphoserine is present on residues Ser-28 and Ser-62. Calponin-homology (CH) domains follow at residues 95 to 202 (QELM…QYFR) and 262 to 369 (NVVK…TKYR). The segment at 223-372 (GILQSRQIQE…NLFTKYRNVE (150 aa)) is required for interaction with TESK1 and ILK.

This sequence belongs to the parvin family. Component of the heterotrimeric IPP (ILK-PINCH-PARVIN) complex composed of ILK, LIMS1/PINCH and PARVA; the complex binds to F-actin via the C-terminal tail of LIMS1 and the N-terminal region of PARVA, promoting F-actin filament bundling. Interacts with TGFB1I1. Interacts with ARHGAP31. Interacts with the actin cytoskeleton. Interacts (via C-terminus) with TESK1 (via C-terminus); the interaction inhibits TESK1 kinase activity. Interacts with PXN/PAXILLIN (via LD motif 4). In terms of tissue distribution, widely expressed.

The protein localises to the cell junction. It is found in the focal adhesion. It localises to the cell membrane. Its subcellular location is the cytoplasm. The protein resides in the cytoskeleton. The protein localises to the myofibril. It is found in the sarcomere. It localises to the z line. Functionally, plays a role in sarcomere organization and in smooth muscle cell contraction. Required for normal development of the embryonic cardiovascular system, and for normal septation of the heart outflow tract. Plays a role in sprouting angiogenesis and is required for normal adhesion of vascular smooth muscle cells to endothelial cells during blood vessel development. Plays a role in the reorganization of the actin cytoskeleton, formation of lamellipodia and ciliogenesis. Plays a role in the establishment of cell polarity, cell adhesion, cell spreading, and directed cell migration. Within the IPP (ILK-PINCH-PARVIN) complex, binds to F-actin, promoting F-actin bundling, a process required to generate force for actin cytoskeleton reorganization and subsequent dynamic cell adhesion events such as cell spreading and migration. The polypeptide is Alpha-parvin (Parva) (Rattus norvegicus (Rat)).